The primary structure comprises 65 residues: Disintegrin CC8A (65 aa).

Residues 1–65 (MNSAHPCCDP…SDCPRNRIKK (65 aa)) enclose the Disintegrin domain. 4 disulfide bridges follow: C7-C30, C21-C27, C26-C51, and C39-C58. Residues 43-45 (RGD) carry the Cell attachment site motif.

This sequence belongs to the disintegrin family. Dimeric disintegrin subfamily. Heterodimer with CC8B; disulfide-linked. As to expression, expressed by the venom gland.

It localises to the secreted. Inhibits integrins alpha-IIb/beta-3 (ITGA2B/ITGB3), alpha-V/beta-3 (ITGAV/ITGB3), and alpha-5/beta-1 (ITGA5/ITGB1). This is Disintegrin CC8A from Cerastes cerastes (Horned desert viper).